The chain runs to 113 residues: Cell cycle protein GpsB (113 aa).

A coiled-coil region spans residues 36 to 68; sequence LDMVIKDYSTFTQEIEALQAENIRLVQELDNAP.

Belongs to the GpsB family. Forms polymers through the coiled coil domains. Interacts with PBP1, MreC and EzrA.

It localises to the cytoplasm. Functionally, divisome component that associates with the complex late in its assembly, after the Z-ring is formed, and is dependent on DivIC and PBP2B for its recruitment to the divisome. Together with EzrA, is a key component of the system that regulates PBP1 localization during cell cycle progression. Its main role could be the removal of PBP1 from the cell pole after pole maturation is completed. Also contributes to the recruitment of PBP1 to the division complex. Not essential for septum formation. This is Cell cycle protein GpsB from Listeria innocua serovar 6a (strain ATCC BAA-680 / CLIP 11262).